The chain runs to 214 residues: Adenylate kinase (214 aa).

10-15 (GAGKGT) is an ATP binding site. Positions 30–59 (STGDMLRAAVKAGTPLGLEAKKVMDAGQLV) are NMP. Residues Thr31, Arg36, 57-59 (QLV), 85-88 (GFPR), and Gln92 contribute to the AMP site. The tract at residues 122–159 (GRRVHPGSGRVYHVVFNPPKVEGKDDVTGEDLAIRPDD) is LID. ATP-binding positions include Arg123 and 132–133 (VY). AMP contacts are provided by Arg156 and Arg167. ATP is bound at residue Gln200.

Belongs to the adenylate kinase family. Monomer.

The protein resides in the cytoplasm. It catalyses the reaction AMP + ATP = 2 ADP. Its pathway is purine metabolism; AMP biosynthesis via salvage pathway; AMP from ADP: step 1/1. Catalyzes the reversible transfer of the terminal phosphate group between ATP and AMP. Plays an important role in cellular energy homeostasis and in adenine nucleotide metabolism. The polypeptide is Adenylate kinase (Shewanella sp. (strain ANA-3)).